The sequence spans 545 residues: Chaperonin GroEL (545 aa).

ATP-binding positions include Thr30–Pro33, Lys51, Asp87–Thr91, Gly415, Asn479–Ala481, and Asp495.

Belongs to the chaperonin (HSP60) family. Forms a cylinder of 14 subunits composed of two heptameric rings stacked back-to-back. Interacts with the co-chaperonin GroES.

The protein resides in the cytoplasm. The enzyme catalyses ATP + H2O + a folded polypeptide = ADP + phosphate + an unfolded polypeptide.. Functionally, together with its co-chaperonin GroES, plays an essential role in assisting protein folding. The GroEL-GroES system forms a nano-cage that allows encapsulation of the non-native substrate proteins and provides a physical environment optimized to promote and accelerate protein folding. The sequence is that of Chaperonin GroEL from Cellvibrio japonicus (strain Ueda107) (Pseudomonas fluorescens subsp. cellulosa).